The primary structure comprises 763 residues: Phosphoglycerol transferase I (763 aa).

The next 4 membrane-spanning stretches (helical) occupy residues 1-21 (MSEL…AWKA), 26-46 (WWFA…ITLF), 77-97 (ILPG…LGWI), and 108-128 (FGYS…SPAF).

Belongs to the OpgB family.

Its subcellular location is the cell inner membrane. The catalysed reaction is a phosphatidylglycerol + a membrane-derived-oligosaccharide D-glucose = a 1,2-diacyl-sn-glycerol + a membrane-derived-oligosaccharide 6-(glycerophospho)-D-glucose.. It participates in glycan metabolism; osmoregulated periplasmic glucan (OPG) biosynthesis. In terms of biological role, transfers a phosphoglycerol residue from phosphatidylglycerol to the membrane-bound nascent glucan backbones. The chain is Phosphoglycerol transferase I from Escherichia coli O17:K52:H18 (strain UMN026 / ExPEC).